A 687-amino-acid polypeptide reads, in one-letter code: Follicle-stimulating hormone receptor (687 aa).

A signal peptide spans 1–17 (MALLLVSLLAFLSLGSG). The LRRNT domain maps to 18–46 (CHHQVCHYSNRVFLCQESKVTEIPSDLPR). The Extracellular portion of the chain corresponds to 18-358 (CHHQVCHYSN…EDIMGYDILR (341 aa)). Residues Cys23 and Cys32 are joined by a disulfide bond. LRR repeat units follow at residues 49 to 72 (LELR…FGDL), 73 to 97 (KKIE…LPKL), 98 to 118 (HEIR…AFQN), 119 to 143 (LPNL…KIQS), 144 to 169 (LQKV…MGLS), 170 to 192 (FESM…AFNG), 193 to 216 (TQLD…VFQG), 217 to 240 (ASGP…GLEN), and 241 to 259 (LKKL…PSLE). Asn191 and Asn199 each carry an N-linked (GlcNAc...) asparagine glycan. Intrachain disulfides connect Cys275-Cys338, Cys276-Cys292, Cys276-Cys348, and Cys292-Cys330. The N-linked (GlcNAc...) asparagine glycan is linked to Asn293. Tyr327 carries the post-translational modification Sulfotyrosine. A helical membrane pass occupies residues 359 to 379 (VLIWFISILAITGNIIVLVIL). The Cytoplasmic segment spans residues 380–390 (ITSQYKLTVPR). Residues 391-413 (FLMCNLAFADLCIGIYLLLIASV) traverse the membrane as a helical segment. Topologically, residues 414 to 435 (DIHTKSQYHNYAIDWQTGAGCD) are extracellular. Cys434 and Cys509 are disulfide-bonded. A helical transmembrane segment spans residues 436 to 457 (AAGFFTVFGSELSVYTLTAITL). The Cytoplasmic segment spans residues 458 to 477 (ERWHTITHAMQLECKVQLRH). The chain crosses the membrane as a helical span at residues 478–500 (AASVMLVGWIFGFGVGLLPIFGI). At 501 to 520 (STYMKVSICLPMDIDSPLSQ) the chain is on the extracellular side. A helical membrane pass occupies residues 521 to 542 (LYVMSLLVLNVLAFVVICGCYT). The Cytoplasmic segment spans residues 543–565 (HIYLTVRNPNIVSSSSDTKIAKR). A helical transmembrane segment spans residues 566–589 (MGILIFTDFLCMAPISFFGISASL). The Extracellular portion of the chain corresponds to 590 to 600 (KVALITVSKSK). The helical transmembrane segment at 601–622 (ILLVLFYPINSCANPFLYAIFT) threads the bilayer. Topologically, residues 623 to 687 (KNFRRDFFIL…LVPLSHLAQN (65 aa)) are cytoplasmic.

The protein belongs to the G-protein coupled receptor 1 family. FSH/LSH/TSH subfamily. In terms of assembly, homotrimer. Functions as a homotrimer binding the FSH hormone heterodimer composed of CGA and FSHB. Interacts with ARRB2. Interacts with APPL2; interaction is independent of follicle stimulating hormone stimulation. N-glycosylated; indirectly required for FSH-binding, possibly via a conformational change that allows high affinity binding of hormone. Post-translationally, sulfated.

The protein localises to the cell membrane. Functionally, g protein-coupled receptor for follitropin, the follicle-stimulating hormone. Through cAMP production activates the downstream PI3K-AKT and ERK1/ERK2 signaling pathways. The polypeptide is Follicle-stimulating hormone receptor (FSHR) (Equus asinus (Donkey)).